The primary structure comprises 389 residues: Tyrosinase-like protein phomQ1 (389 aa).

A helical transmembrane segment spans residues 53 to 73 (TIIVVSVITFAAIIGCWVFLS). Cu cation-binding residues include His141 and His150. Residue Asn220 is glycosylated (N-linked (GlcNAc...) asparagine). The Cu cation site is built by His290 and His316.

It belongs to the tyrosinase family. Cu(2+) is required as a cofactor.

It localises to the membrane. Its pathway is mycotoxin biosynthesis. Its function is as follows. Tyrosinase-like protein; part of the gene cluster that mediates the biosynthesis of the phomopsins, a group of hexapeptide mycotoxins which infects lupins and causes lupinosis disease in livestock. Within the pathway, phomQ1 functions as a halogenase, converting. The pathway starts with the processing of the precursor phomA by several endopeptidases including kexin proteases as well as the cluster-specific S41 family peptidase phomP1 and the oligopeptidase phomG to produce 10 identical copies of the hexapeptide Tyr-Val-Ile-Pro-Ile-Asp. After being excised from the precursor peptide, the core peptides are cyclized and modified post-translationally by enzymes encoded within the gene cluster. The timing and order of proteolysis of the phomA precursor and PTMs are still unknown. Two tyrosinase-like enzymes, phomQ1 and phomQ2, catalyze the chlorination and hydroxylation of Tyr, respectively. PhomYb, is proposed to be involved in the construction of the macrocyclic structure. The other 4 ustYa family proteins may be involved in PTMs that generate the unique structure of phomopsin A. PhomYa is required for the hydroxylation of C-beta of Tyr. PhomYc, phomYd, and phomYe are responsible for the biosynthesis of 2,3-dehydroisoleucine (dIle), 2,3-dehydroaspartic acid (dAsp), and 3,4-dehydroproline (dPro), respectively. While dIle formation by phomYc is indispensable for the installation of dAsp by phomYd, the order of the other PTMs have not been elucidated yet. Most of the biosynthetic enzymes likely have broad substrate specificity, and thus, there might be a metabolic grid from a precursor to phomopsin A. The enzyme(s) responsible for the biosynthesis of 3,4-dehydrovaline (dVal) have also not been identified yet. Finally, phomM acts as an S-adenosylmethionine-dependent alpha-N-methyltransferase that catalyzes two successive N-methylation reactions, converting N-desmethyl-phomopsin A to phomopsin A and phomopsin A further to an N,N-dimethylated congener called phomopsin E. The chain is Tyrosinase-like protein phomQ1 from Diaporthe leptostromiformis (Lupinosis disease fungus).